The primary structure comprises 352 residues: C-C chemokine receptor type 5 (352 aa).

Residues M1–A30 are Extracellular-facing. Y3 bears the Sulfotyrosine mark. O-linked (GalNAc...) serine glycosylation is found at S6 and S7. Sulfotyrosine occurs at positions 10, 14, and 15. Cystine bridges form between C20–C269 and C101–C178. Residues R31 to C58 form a helical membrane-spanning segment. At K59–Y68 the chain is on the cytoplasmic side. A helical membrane pass occupies residues L69 to Y89. Over A90–Q102 the chain is Extracellular. A helical membrane pass occupies residues L103–I124. At D125 to T141 the chain is on the cytoplasmic side. A helical transmembrane segment spans residues V142 to F166. Residues T167–I198 lie on the Extracellular side of the membrane. A helical transmembrane segment spans residues V199 to L218. The Cytoplasmic segment spans residues K219–R235. Residues L236 to F260 traverse the membrane as a helical segment. The Extracellular portion of the chain corresponds to Q261–Q277. Residues A278–G301 form a helical membrane-spanning segment. At E302–L352 the chain is on the cytoplasmic side. S-palmitoyl cysteine attachment occurs at residues C321, C323, and C324. S336, S337, S342, and S349 each carry phosphoserine; by BARK1.

It belongs to the G-protein coupled receptor 1 family. In terms of assembly, interacts with PRAF2. Efficient ligand binding to CCL3/MIP-1alpha and CCL4/MIP-1beta requires sulfation, O-glycosylation and sialic acid modifications. Glycosylation on Ser-6 is required for efficient binding of CCL4. Interacts with GRK2. Interacts with ARRB1 and ARRB2. Interacts with CNIH4. Interacts with S100A4; this interaction stimulates T-lymphocyte chemotaxis. In terms of processing, sulfated on at least 2 of the N-terminal tyrosines. Sulfation is required for efficient binding of the chemokines, CCL3 and CCL4. Post-translationally, palmitoylation in the C-terminal is important for cell surface expression. Phosphorylation on serine residues in the C-terminal is stimulated by binding CC chemokines especially by APO-RANTES. In terms of processing, O-glycosylated, but not N-glycosylated. Ser-6 appears to be the major site even if Ser-7 may be also O-glycosylated. Also sialylated glycans present which contribute to chemokine binding. Thr-16 and Ser-17 may also be glycosylated and, if so, with small moieties such as a T-antigen.

It is found in the cell membrane. In terms of biological role, receptor for a number of inflammatory CC-chemokines including CCL3/MIP-1-alpha, CCL4/MIP-1-beta and RANTES and subsequently transduces a signal by increasing the intracellular calcium ion level. May play a role in the control of granulocytic lineage proliferation or differentiation. Participates in T-lymphocyte migration to the infection site by acting as a chemotactic receptor. In Gorilla gorilla gorilla (Western lowland gorilla), this protein is C-C chemokine receptor type 5 (CCR5).